Here is a 702-residue protein sequence, read N- to C-terminus: MSESQLSLTPVKRSFQFGQHQVTLETGGVARQADGAVLVDMADTVVLVTVVGRKDPAAARDFLPLTVNYQERTYAAGRIPGGFFKREGRPSEKETLTCRLIDRPIRPLFPEGFRQEVQVIATVLSLNDEVDADIPAMIGTSAALALSGIPFEGPIGACRVGHLDGEFVLNPTFSQTAESDLDLVVAGTQDAVLMVESEANLLPESTMLDAVLYGHEQMQVAIDTINDLAAEAGKPRWDWQPPAKNESLDSAVAELVRSDLEAAYQIADKQERSERVGALRDKAVEALADEEREGWGAGDVGEAFKTLEKKIVRGRILAGHPRIDGRDNQTVRPLNVQAGVLPRTHGSAIFTRGETQAIVVSTLGTGRDAQVIDALEGERREPFMLHYNFPPYCVGETGFIGTPKRREIGHGKLAKRGVEAVMPSDEEFPYVIRVVSEVTESNGSSSMATVCGTSLSLMDAGVPLKAQVAGIAMGLIKEGDEFAVLTDILGDEDHLGDMDFKVAGSKDGVTALQMDIKIDGITREIMEQALDQARSGRLHILEQMNQVIDKPREQMSEYAPRLLTMRIDPERIRDVIGKGGATIRGLTEETGTNIDISDEGVVTIASADKAAAEEAKKRIELLTADVEVGKVYDGKVAKLMDFGAFVNILPGRDGLVHISQISNNRVENVADELSEGDSVRVKVLEVDRQGRIRLSMKAVEEE.

2 residues coordinate Mg(2+): Asp493 and Asp499. Positions 560-619 (PRLLTMRIDPERIRDVIGKGGATIRGLTEETGTNIDISDEGVVTIASADKAAAEEAKKRI) constitute a KH domain. Residues 629-697 (GKVYDGKVAK…RQGRIRLSMK (69 aa)) form the S1 motif domain.

It belongs to the polyribonucleotide nucleotidyltransferase family. As to quaternary structure, component of the RNA degradosome, which is a multiprotein complex involved in RNA processing and mRNA degradation. Requires Mg(2+) as cofactor.

The protein localises to the cytoplasm. It catalyses the reaction RNA(n+1) + phosphate = RNA(n) + a ribonucleoside 5'-diphosphate. Involved in mRNA degradation. Catalyzes the phosphorolysis of single-stranded polyribonucleotides processively in the 3'- to 5'-direction. In Halorhodospira halophila (strain DSM 244 / SL1) (Ectothiorhodospira halophila (strain DSM 244 / SL1)), this protein is Polyribonucleotide nucleotidyltransferase.